We begin with the raw amino-acid sequence, 417 residues long: Gamma-glutamyl phosphate reductase (417 aa).

This sequence belongs to the gamma-glutamyl phosphate reductase family.

It localises to the cytoplasm. It carries out the reaction L-glutamate 5-semialdehyde + phosphate + NADP(+) = L-glutamyl 5-phosphate + NADPH + H(+). It functions in the pathway amino-acid biosynthesis; L-proline biosynthesis; L-glutamate 5-semialdehyde from L-glutamate: step 2/2. Its function is as follows. Catalyzes the NADPH-dependent reduction of L-glutamate 5-phosphate into L-glutamate 5-semialdehyde and phosphate. The product spontaneously undergoes cyclization to form 1-pyrroline-5-carboxylate. This Escherichia coli O157:H7 protein is Gamma-glutamyl phosphate reductase.